A 129-amino-acid chain; its full sequence is Phosphoribosyl-AMP cyclohydrolase (129 aa).

Residue D76 coordinates Mg(2+). Position 77 (C77) interacts with Zn(2+). Mg(2+) contacts are provided by D78 and D80. Zn(2+) contacts are provided by C97 and C104.

It belongs to the PRA-CH family. Homodimer. The cofactor is Mg(2+). It depends on Zn(2+) as a cofactor.

The protein localises to the cytoplasm. The catalysed reaction is 1-(5-phospho-beta-D-ribosyl)-5'-AMP + H2O = 1-(5-phospho-beta-D-ribosyl)-5-[(5-phospho-beta-D-ribosylamino)methylideneamino]imidazole-4-carboxamide. It functions in the pathway amino-acid biosynthesis; L-histidine biosynthesis; L-histidine from 5-phospho-alpha-D-ribose 1-diphosphate: step 3/9. Functionally, catalyzes the hydrolysis of the adenine ring of phosphoribosyl-AMP. The chain is Phosphoribosyl-AMP cyclohydrolase from Albidiferax ferrireducens (strain ATCC BAA-621 / DSM 15236 / T118) (Rhodoferax ferrireducens).